The following is a 301-amino-acid chain: Phosphatidylglycerol--prolipoprotein diacylglyceryl transferase (301 aa).

7 helical membrane-spanning segments follow: residues 17-37, 59-79, 97-117, 129-149, 203-223, 230-250, and 257-277; these read LAVR…IVVG, MLFY…VLFY, GGMS…LFAW, FVAP…FING, PSQL…LWLF, VGAA…TVEF, and FLGL…PMII. Arg142 lines the a 1,2-diacyl-sn-glycero-3-phospho-(1'-sn-glycerol) pocket.

The protein belongs to the Lgt family.

Its subcellular location is the cell inner membrane. The catalysed reaction is L-cysteinyl-[prolipoprotein] + a 1,2-diacyl-sn-glycero-3-phospho-(1'-sn-glycerol) = an S-1,2-diacyl-sn-glyceryl-L-cysteinyl-[prolipoprotein] + sn-glycerol 1-phosphate + H(+). The protein operates within protein modification; lipoprotein biosynthesis (diacylglyceryl transfer). Functionally, catalyzes the transfer of the diacylglyceryl group from phosphatidylglycerol to the sulfhydryl group of the N-terminal cysteine of a prolipoprotein, the first step in the formation of mature lipoproteins. The sequence is that of Phosphatidylglycerol--prolipoprotein diacylglyceryl transferase from Paraburkholderia phymatum (strain DSM 17167 / CIP 108236 / LMG 21445 / STM815) (Burkholderia phymatum).